Here is a 293-residue protein sequence, read N- to C-terminus: Ribosomal protein L11 methyltransferase (293 aa).

The S-adenosyl-L-methionine site is built by threonine 145, glycine 166, aspartate 188, and asparagine 230.

It belongs to the methyltransferase superfamily. PrmA family.

The protein localises to the cytoplasm. It carries out the reaction L-lysyl-[protein] + 3 S-adenosyl-L-methionine = N(6),N(6),N(6)-trimethyl-L-lysyl-[protein] + 3 S-adenosyl-L-homocysteine + 3 H(+). Methylates ribosomal protein L11. This chain is Ribosomal protein L11 methyltransferase, found in Salmonella agona (strain SL483).